The chain runs to 534 residues: Lysophosphatidylcholine acyltransferase 1 (534 aa).

A disordered region spans residues 1–25; sequence MRLRGRGPRAAPSSSSGAGDARRLA. Over 1–57 the chain is Cytoplasmic; that stretch reads MRLRGRGPRAAPSSSSGAGDARRLAPPGRNPFVHELRLSALQKAQVAFMTLTLFPIR. The span at 8 to 19 shows a compositional bias: low complexity; it reads PRAAPSSSSGAG. A helical; Signal-anchor for type II membrane protein membrane pass occupies residues 58-78; that stretch reads LLFAAFMMLLAWPFALLASLG. Over 79–534 the chain is Lumenal; it reads PPDKEPEQPL…GRKNSCKKAD (456 aa). The short motif at 135–140 is the HXXXXD motif element; sequence HSSYFD. EF-hand domains lie at 379–414 and 451–486; these read PVSDALEDMFSLFDESGGGEIDLREYVVALSVVCRP and VSELTVTDLFQAIDQEDKGRITFDDFCGFAEMYPDY. The Ca(2+) site is built by Asp392, Ser394, Glu398, and Glu403. The short motif at 531–534 is the Di-lysine motif element; that stretch reads KKAD.

The protein belongs to the 1-acyl-sn-glycerol-3-phosphate acyltransferase family. Predominantly expressed in lung where it is enriched in alveolar type II cells. Expressed at lower levels in spleen and brain. Also detected in erythroleukemic cells and reticulocytes. Weakly or not expressed in other tissues.

It localises to the endoplasmic reticulum membrane. Its subcellular location is the golgi apparatus membrane. The protein localises to the cell membrane. The protein resides in the lipid droplet. It carries out the reaction a 1-acyl-sn-glycero-3-phosphocholine + an acyl-CoA = a 1,2-diacyl-sn-glycero-3-phosphocholine + CoA. The catalysed reaction is a 1-O-alkyl-sn-glycero-3-phosphocholine + acetyl-CoA = a 1-O-alkyl-2-acetyl-sn-glycero-3-phosphocholine + CoA. It catalyses the reaction a 1-acyl-sn-glycero-3-phosphate + an acyl-CoA = a 1,2-diacyl-sn-glycero-3-phosphate + CoA. The enzyme catalyses a 1-O-(1Z-alkenyl)-sn-glycero-3-phosphocholine + an acyl-CoA = a 1-O-(1Z-alkenyl)-2-acyl-sn-glycero-3-phosphocholine + CoA. It carries out the reaction 1-acyl-sn-glycero-3-phospho-(1'-sn-glycerol) + an acyl-CoA = a 1,2-diacyl-sn-glycero-3-phospho-(1'-sn-glycerol) + CoA. The catalysed reaction is 1-hexadecanoyl-sn-glycero-3-phosphocholine + hexadecanoyl-CoA = 1,2-dihexadecanoyl-sn-glycero-3-phosphocholine + CoA. It catalyses the reaction 1-O-hexadecyl-sn-glycero-3-phosphocholine + hexadecanoyl-CoA = 1-O-hexadecyl-2-hexadecanoyl-sn-glycero-3-phosphocholine + CoA. The enzyme catalyses a 1-O-(1Z-alkenyl)-sn-glycero-3-phosphocholine + hexadecanoyl-CoA = 1-O-(1Z)-alkenyl-2-hexadecanoyl-sn-glycero-3-phosphocholine + CoA. It carries out the reaction 1-hexadecanoyl-sn-glycero-3-phospho-(1'-sn-glycerol) + hexadecanoyl-CoA = 1,2-dihexadecanoyl-sn-glycero-3-phospho-(1'-sn-glycerol) + CoA. The catalysed reaction is 1-dodecanoyl-sn-glycero-3-phosphocholine + hexadecanoyl-CoA = 1-dodecanoyl-2-hexadecanoyl-sn-glycero-3-phosphocholine + CoA. It catalyses the reaction 1-tetradecanoyl-sn-glycero-3-phosphocholine + hexadecanoyl-CoA = 1-tetradecanoyl-2-hexadecanoyl-sn-glycero-3-phosphocholine + CoA. The enzyme catalyses 1-O-octadecyl-sn-glycero-3-phosphocholine + hexadecanoyl-CoA = 1-O-octadecyl-2-hexadecanoyl-sn-glycero-3-phosphocholine + CoA. It carries out the reaction 1-octadecanoyl-sn-glycero-3-phosphocholine + hexadecanoyl-CoA = 1-octadecanoyl-2-hexadecanoyl-sn-glycero-3-phosphocholine + CoA. The catalysed reaction is 1-(9Z-octadecenoyl)-sn-glycero-3-phosphocholine + hexadecanoyl-CoA = 1-(9Z-octadecenoyl)-2-hexadecanoyl-sn-glycero-3-phosphocholine + CoA. It catalyses the reaction 1-eicosanoyl-sn-glycero-3-phosphocholine + hexadecanoyl-CoA = 1-eicosanoyl-2-hexadecanoyl-sn-glycero-3-phosphocholine + CoA. The enzyme catalyses hexanoyl-CoA + 1-hexadecanoyl-sn-glycero-3-phosphocholine = 1-hexadecanoyl-2-hexanoyl-sn-glycero-3-phosphocholine + CoA. It carries out the reaction octanoyl-CoA + 1-hexadecanoyl-sn-glycero-3-phosphocholine = 1-hexadecanoyl-2-octanoyl-sn-glycero-3-phosphocholine + CoA. The catalysed reaction is decanoyl-CoA + 1-hexadecanoyl-sn-glycero-3-phosphocholine = 1-hexadecanoyl-2-decanoyl-sn-glycero-3-phosphocholine + CoA. It catalyses the reaction dodecanoyl-CoA + 1-hexadecanoyl-sn-glycero-3-phosphocholine = 1-hexadecanoyl-2-dodecanoyl-sn-glycero-3-phosphocholine + CoA. The enzyme catalyses tetradecanoyl-CoA + 1-hexadecanoyl-sn-glycero-3-phosphocholine = 1-hexadecanoyl-2-tetradecanoyl-sn-glycero-3-phosphocholine + CoA. It carries out the reaction 1-hexadecanoyl-sn-glycero-3-phosphocholine + (9Z)-octadecenoyl-CoA = 1-hexadecanoyl-2-(9Z-octadecenoyl)-sn-glycero-3-phosphocholine + CoA. The catalysed reaction is (9Z,12Z)-octadecadienoyl-CoA + 1-hexadecanoyl-sn-glycero-3-phosphocholine = 1-hexadecanoyl-2-(9Z,12Z-octadecadienoyl)-sn-glycero-3-phosphocholine + CoA. It catalyses the reaction (4Z,7Z,10Z,13Z,16Z,19Z)-docosahexaenoyl-CoA + 1-hexadecanoyl-sn-glycero-3-phosphocholine = 1-hexadecanoyl-2-(4Z,7Z,10Z,13Z,16Z,19Z-docosahexaenoyl)-sn-glycero-3-phosphocholine + CoA. The enzyme catalyses 1-hexadecanoyl-sn-glycero-3-phosphocholine + acetyl-CoA = 1-hexadecanoyl-2-acetyl-sn-glycero-3-phosphocholine + CoA. It carries out the reaction eicosanoyl-CoA + 1-hexadecanoyl-sn-glycero-3-phosphocholine = 1-hexadecanoyl-2-eicosanoyl-sn-glycero-3-phosphocholine + CoA. The catalysed reaction is 1-O-hexadecyl-sn-glycero-3-phosphocholine + acetyl-CoA = 1-O-hexadecyl-2-acetyl-sn-glycero-3-phosphocholine + CoA. It catalyses the reaction a 1-acyl-sn-glycero-3-phosphocholine + hexadecanoyl-CoA = 1-acyl-2-hexadecanoyl-sn-glycero-3-phosphocholine + CoA. The enzyme catalyses a 1-acyl-sn-glycero-3-phosphate + hexadecanoyl-CoA = 1-acyl-2-hexadecanoyl-sn-glycero-3-phosphate + CoA. It carries out the reaction 1-acyl-sn-glycero-3-phospho-(1'-sn-glycerol) + hexadecanoyl-CoA = 1-acyl-2-hexadecanoyl-sn-glycero-3-phospho-(1'-sn-glycerol) + CoA. It functions in the pathway lipid metabolism; phospholipid metabolism. Its activity is regulated as follows. Not activated by inflammatory stimulation. Inhibited by Cu(2+), Fe(2+), Ca(2+) and Mg(2+). Activity is not affected by Co(2+) or Mn(2+). In terms of biological role, exhibits both acyltransferase and acetyltransferase activities. Activity is calcium-independent. Catalyzes the conversion of lysophosphatidylcholine (1-acyl-sn-glycero-3-phosphocholine or LPC) into phosphatidylcholine (1,2-diacyl-sn-glycero-3-phosphocholine or PC). Catalyzes the conversion 1-acyl-sn-glycerol-3-phosphate (lysophosphatidic acid or LPA) into 1,2-diacyl-sn-glycerol-3-phosphate (phosphatidic acid or PA) by incorporating an acyl moiety at the sn-2 position of the glycerol backbone. Displays a clear preference for saturated fatty acyl-CoAs, and 1-myristoyl or 1-palmitoyl LPC as acyl donors and acceptors, respectively. Involved in platelet-activating factor (PAF) biosynthesis by catalyzing the conversion of the PAF precursor, 1-O-alkyl-sn-glycero-3-phosphocholine (lyso-PAF) into 1-O-alkyl-2-acetyl-sn-glycero-3-phosphocholine (PAF). May synthesize phosphatidylcholine in pulmonary surfactant, thereby playing a pivotal role in respiratory physiology. Involved in the regulation of lipid droplet number and size. This Mus musculus (Mouse) protein is Lysophosphatidylcholine acyltransferase 1 (Lpcat1).